Consider the following 130-residue polypeptide: Large ribosomal subunit protein uL14 (130 aa).

Belongs to the universal ribosomal protein uL14 family. In terms of assembly, part of the 50S ribosomal subunit. Forms a cluster with proteins L3 and L19. In the 70S ribosome, L14 and L19 interact and together make contacts with the 16S rRNA in bridges B5 and B8.

Functionally, binds to 23S rRNA. Forms part of two intersubunit bridges in the 70S ribosome. The chain is Large ribosomal subunit protein uL14 from Helicobacter pylori (strain P12).